The primary structure comprises 100 residues: Chorion class A protein M2774 (100 aa).

A left arm region spans residues 1–33; that stretch reads GGGWNGWNGLGGGWNGLGVGWSRLDGGYGGGCG. The segment at 34-81 is central domain; the sequence is SYGGEGIGNVGVADELPVGGVTAVGGRVPIIGGVEYGGPARAAGAVSI. Residues 82–100 form a right arm region; it reads CGHCAPTCGCGRAGLGGYY.

It belongs to the chorion protein family.

This protein is one of many from the eggshell of the silk moth. This Bombyx mori (Silk moth) protein is Chorion class A protein M2774.